Reading from the N-terminus, the 211-residue chain is MTSQRTRERLIQRLYEEGLSNARVLEVIRRTPRHLFVDEALAHRAYEDTALPIGHNQTISQPFMVARMTELLLAAGPLDKVMEIGTGSGYQTAVLAQLVERVFSVERIQALQDKAKERLAELNLRNVVFRWGDGWEGWSALAPYNGIIVTAAASEVPQSLLDQLAPGGRLVIPVGGGEVQQLMLIVRTEDGFSRQVLDSVRFVPLLNGPIA.

Residue Ser60 is part of the active site.

It belongs to the methyltransferase superfamily. L-isoaspartyl/D-aspartyl protein methyltransferase family.

Its subcellular location is the cytoplasm. It carries out the reaction [protein]-L-isoaspartate + S-adenosyl-L-methionine = [protein]-L-isoaspartate alpha-methyl ester + S-adenosyl-L-homocysteine. Catalyzes the methyl esterification of L-isoaspartyl residues in peptides and proteins that result from spontaneous decomposition of normal L-aspartyl and L-asparaginyl residues. It plays a role in the repair and/or degradation of damaged proteins. This is Protein-L-isoaspartate O-methyltransferase from Pseudomonas paraeruginosa (strain DSM 24068 / PA7) (Pseudomonas aeruginosa (strain PA7)).